Reading from the N-terminus, the 389-residue chain is Transcription factor TGAL10 (389 aa).

Residues D80–I110 are disordered. Positions S91–I110 are enriched in basic and acidic residues. Residues R107–R151 enclose the bZIP domain. The segment at K109–K129 is basic motif. The tract at residues L135–I149 is leucine-zipper. Positions V176–G389 constitute a DOG1 domain. 2 disordered regions span residues T320–G345 and H370–G389. The segment covering L380–G389 has biased composition (basic residues).

This sequence belongs to the bZIP family.

The protein resides in the nucleus. In terms of biological role, transcriptional regulator involved in defense response. The protein is Transcription factor TGAL10 of Oryza sativa subsp. japonica (Rice).